We begin with the raw amino-acid sequence, 290 residues long: Phosphate import ATP-binding protein PstB (290 aa).

The ABC transporter domain maps to 25 to 285 (LEARNLDFYY…PKTRRARDYL (261 aa)). Residue 57–64 (GPSGCGKS) participates in ATP binding.

This sequence belongs to the ABC transporter superfamily. Phosphate importer (TC 3.A.1.7) family. As to quaternary structure, the complex is composed of two ATP-binding proteins (PstB), two transmembrane proteins (PstC and PstA) and a solute-binding protein (PstS).

The protein resides in the cell inner membrane. It catalyses the reaction phosphate(out) + ATP + H2O = ADP + 2 phosphate(in) + H(+). Part of the ABC transporter complex PstSACB involved in phosphate import. Responsible for energy coupling to the transport system. The chain is Phosphate import ATP-binding protein PstB from Zymomonas mobilis subsp. mobilis (strain ATCC 31821 / ZM4 / CP4).